Consider the following 314-residue polypeptide: DNA-directed RNA polymerase subunit alpha (314 aa).

Residues 1 to 228 are alpha N-terminal domain (alpha-NTD); the sequence is MAQYTIECVE…DQLRPLQEIT (228 aa). An alpha C-terminal domain (alpha-CTD) region spans residues 241–314; that stretch reads NTVGQVPIEE…SLPKDKPARS (74 aa).

Belongs to the RNA polymerase alpha chain family. As to quaternary structure, in cyanobacteria the RNAP catalytic core is composed of 2 alpha, 1 beta, 1 beta', 1 gamma and 1 omega subunit. When a sigma factor is associated with the core the holoenzyme is formed, which can initiate transcription.

The catalysed reaction is RNA(n) + a ribonucleoside 5'-triphosphate = RNA(n+1) + diphosphate. Its function is as follows. DNA-dependent RNA polymerase catalyzes the transcription of DNA into RNA using the four ribonucleoside triphosphates as substrates. The protein is DNA-directed RNA polymerase subunit alpha of Gloeobacter violaceus (strain ATCC 29082 / PCC 7421).